We begin with the raw amino-acid sequence, 116 residues long: Large ribosomal subunit protein bL17 (116 aa).

The protein belongs to the bacterial ribosomal protein bL17 family. In terms of assembly, part of the 50S ribosomal subunit. Contacts protein L32.

This Gloeobacter violaceus (strain ATCC 29082 / PCC 7421) protein is Large ribosomal subunit protein bL17.